The following is a 230-amino-acid chain: uncharacterized protein (230 aa).

In terms of domain architecture, ABC transporter spans I2 to E230. G38–S45 contributes to the ATP binding site.

Belongs to the ABC transporter superfamily. In terms of assembly, part of a complex composed of YknX, YknY and YknZ. The complex interacts with YknW.

It is found in the cell membrane. In terms of biological role, part of an unusual four-component transporter, which is required for protection against the killing factor SdpC (sporulation-delaying protein). This is an uncharacterized protein from Bacillus subtilis (strain 168).